Reading from the N-terminus, the 413-residue chain is Putative competence-damage inducible protein (413 aa).

It belongs to the CinA family.

The polypeptide is Putative competence-damage inducible protein (Lacticaseibacillus paracasei (strain ATCC 334 / BCRC 17002 / CCUG 31169 / CIP 107868 / KCTC 3260 / NRRL B-441) (Lactobacillus paracasei)).